The sequence spans 229 residues: Demethylmenaquinone methyltransferase (229 aa).

Residues Thr58, Asp78, and Asp100–Ala101 contribute to the S-adenosyl-L-methionine site.

It belongs to the class I-like SAM-binding methyltransferase superfamily. MenG/UbiE family.

It carries out the reaction a 2-demethylmenaquinol + S-adenosyl-L-methionine = a menaquinol + S-adenosyl-L-homocysteine + H(+). The protein operates within quinol/quinone metabolism; menaquinone biosynthesis; menaquinol from 1,4-dihydroxy-2-naphthoate: step 2/2. Functionally, methyltransferase required for the conversion of demethylmenaquinol (DMKH2) to menaquinol (MKH2). The sequence is that of Demethylmenaquinone methyltransferase from Thermotoga maritima (strain ATCC 43589 / DSM 3109 / JCM 10099 / NBRC 100826 / MSB8).